A 606-amino-acid chain; its full sequence is Proton myo-inositol cotransporter hmit-1.1 (606 aa).

At 1–20 the chain is on the cytoplasmic side; sequence MVAVAAFSSSGQDKPAHTPK. Residues 21–41 form a helical membrane-spanning segment; that stretch reads LGLFVYILAAASVIGGFLFGY. The Extracellular segment spans residues 42-63; it reads DTSVVSAAMLYMPDAPGLKPMD. A helical membrane pass occupies residues 64 to 84; the sequence is TVWQEVLVSISPGMAAVGSLM. The Cytoplasmic segment spans residues 85-96; it reads SGTSSDYIGRRK. The chain crosses the membrane as a helical span at residues 97-117; the sequence is VILGASAIFTIGALVCAASVN. Residue K118 is a topological domain, extracellular. A helical membrane pass occupies residues 119–139; that stretch reads IMLLVGRVLLGIAIGFASMIV. Residues 140–152 lie on the Cytoplasmic side of the membrane; the sequence is PVYLGETAPTHVR. Residues 153-173 form a helical membrane-spanning segment; that stretch reads GMLVAAFALMISFGQVVANIT. Residues 174–188 lie on the Extracellular side of the membrane; sequence GGAFSYIDPYNVGWR. A helical transmembrane segment spans residues 189–209; it reads LMFAFAAVPSIIQFVCFMFLP. Topologically, residues 210 to 278 are cytoplasmic; it reads ETPRWLYENG…RILKTPHVLK (69 aa). A helical membrane pass occupies residues 279–299; sequence ACFIGSMLQAFQQLAGINTIL. Residues 300–317 lie on the Extracellular side of the membrane; that stretch reads YYTADIIRSSGISNNHTT. N314 carries N-linked (GlcNAc...) asparagine glycosylation. The chain crosses the membrane as a helical span at residues 318–338; sequence IWISVLLSLCNFIGPFVPMSL. Residues 339-345 lie on the Cytoplasmic side of the membrane; the sequence is IEKVGRR. A helical transmembrane segment spans residues 346 to 366; sequence IIFLFSCGLVVLSLVFIGVAF. The Extracellular segment spans residues 367 to 464; that stretch reads LLVNHDSAAT…EKYYCDTKYT (98 aa). 2 N-linked (GlcNAc...) asparagine glycosylation sites follow: N387 and N445. Residues 465 to 485 traverse the membrane as a helical segment; the sequence is LLPIIACGVYLLTFSSGFTSL. Residues 486 to 501 lie on the Cytoplasmic side of the membrane; that stretch reads PWVLNSEFYPMWARST. The chain crosses the membrane as a helical span at residues 502–522; the sequence is CVAISTTSNWVFNLIIALTYL. Residues 523 to 531 lie on the Extracellular side of the membrane; it reads SLTQVIGKY. A helical transmembrane segment spans residues 532–552; sequence GAFWLYAGLTVIAFIFILFLV. Residues 553–606 are Cytoplasmic-facing; the sequence is PETKGYSIEEVEMLFMNKKQRREAESRRRETVTEVRSRMNSTVSFGQHNEVHKY.

This sequence belongs to the major facilitator superfamily. Sugar transporter (TC 2.A.1.1) family. Expressed in the intestine.

It is found in the cell membrane. The catalysed reaction is myo-inositol(out) + H(+)(out) = myo-inositol(in) + H(+)(in). Its function is as follows. H(+)-myo-inositol cotransporter. Probably by promoting the transport of myo-inositol regulates intracellular osmosis in response to hyperosmotic stress. The protein is Proton myo-inositol cotransporter hmit-1.1 of Caenorhabditis elegans.